The chain runs to 165 residues: Large ribosomal subunit protein uL10 (165 aa).

Belongs to the universal ribosomal protein uL10 family. As to quaternary structure, part of the ribosomal stalk of the 50S ribosomal subunit. The N-terminus interacts with L11 and the large rRNA to form the base of the stalk. The C-terminus forms an elongated spine to which L12 dimers bind in a sequential fashion forming a multimeric L10(L12)X complex.

In terms of biological role, forms part of the ribosomal stalk, playing a central role in the interaction of the ribosome with GTP-bound translation factors. The polypeptide is Large ribosomal subunit protein uL10 (Pectobacterium atrosepticum (strain SCRI 1043 / ATCC BAA-672) (Erwinia carotovora subsp. atroseptica)).